The sequence spans 607 residues: NADH-ubiquinone oxidoreductase chain 5 (607 aa).

The next 16 helical transmembrane spans lie at 3–23 (IFTT…LISM), 35–55 (YTTT…LMFF), 84–104 (FFSI…MQFS), 117–137 (FIKY…ANNM), 140–160 (LFIG…WWYG), 171–191 (AILY…WFSL), 210–230 (LIPL…FGLH), 241–261 (TPVS…FLLV), 272–292 (FILT…AICA), 301–320 (IIAF…LGMN), 324–344 (LAFL…MCSG), 365–385 (IMPF…GMPF), 405–427 (NAWA…MRII), 457–477 (LAFG…PTSI), 482–502 (MPWF…LIAL), and 586–606 (LYFM…SINL).

The protein belongs to the complex I subunit 5 family. Core subunit of respiratory chain NADH dehydrogenase (Complex I) which is composed of 45 different subunits.

The protein resides in the mitochondrion inner membrane. It carries out the reaction a ubiquinone + NADH + 5 H(+)(in) = a ubiquinol + NAD(+) + 4 H(+)(out). Core subunit of the mitochondrial membrane respiratory chain NADH dehydrogenase (Complex I) which catalyzes electron transfer from NADH through the respiratory chain, using ubiquinone as an electron acceptor. Essential for the catalytic activity and assembly of complex I. The polypeptide is NADH-ubiquinone oxidoreductase chain 5 (Mtnd5) (Mus musculus (Mouse)).